A 152-amino-acid chain; its full sequence is MAKRVQVVLSEDILSLGKDGDLVEVAPGYARNFLLPHGKALPVTPAVLKQVEHRRAKEAERLAALKADAVAFRTALDTIGRFTVKKQTGGDDVLFGTVTNVDVAEAIESATKKLVDKRDITVPEVHRTGNYKVQVKLHPEVVAEINLEVVSH.

This sequence belongs to the bacterial ribosomal protein bL9 family.

Its function is as follows. Binds to the 23S rRNA. The polypeptide is Large ribosomal subunit protein bL9 (Synechococcus sp. (strain RCC307)).